A 211-amino-acid polypeptide reads, in one-letter code: MYQPDFPAVPFRLGLYPVVDSVQWIERLLEAGVRTLQLRIKDKRDEEVEDDVSAAIALGRRYNARLFINDYWRLAIKHNAYGVHLGQEDLETTDLKAIQAAGLRLGVSTHDDMEIDIALAARPSYIALGHVFPTQTKQMPSAPQGLEQLARHIERLGDYPTVAIGGISLERASPVLKTGVGSIAVVSAITRAEDWREATAQLLAIAGAGDE.

4-amino-2-methyl-5-(diphosphooxymethyl)pyrimidine is bound by residues glutamine 37–lysine 41 and asparagine 69. The Mg(2+) site is built by aspartate 70 and aspartate 89. Serine 108 lines the 4-amino-2-methyl-5-(diphosphooxymethyl)pyrimidine pocket. Threonine 134 to threonine 136 lines the 2-[(2R,5Z)-2-carboxy-4-methylthiazol-5(2H)-ylidene]ethyl phosphate pocket. Lysine 137 is a binding site for 4-amino-2-methyl-5-(diphosphooxymethyl)pyrimidine. 2-[(2R,5Z)-2-carboxy-4-methylthiazol-5(2H)-ylidene]ethyl phosphate-binding positions include glycine 166 and valine 186–serine 187.

Belongs to the thiamine-phosphate synthase family. Requires Mg(2+) as cofactor.

The enzyme catalyses 2-[(2R,5Z)-2-carboxy-4-methylthiazol-5(2H)-ylidene]ethyl phosphate + 4-amino-2-methyl-5-(diphosphooxymethyl)pyrimidine + 2 H(+) = thiamine phosphate + CO2 + diphosphate. It carries out the reaction 2-(2-carboxy-4-methylthiazol-5-yl)ethyl phosphate + 4-amino-2-methyl-5-(diphosphooxymethyl)pyrimidine + 2 H(+) = thiamine phosphate + CO2 + diphosphate. The catalysed reaction is 4-methyl-5-(2-phosphooxyethyl)-thiazole + 4-amino-2-methyl-5-(diphosphooxymethyl)pyrimidine + H(+) = thiamine phosphate + diphosphate. The protein operates within cofactor biosynthesis; thiamine diphosphate biosynthesis; thiamine phosphate from 4-amino-2-methyl-5-diphosphomethylpyrimidine and 4-methyl-5-(2-phosphoethyl)-thiazole: step 1/1. Condenses 4-methyl-5-(beta-hydroxyethyl)thiazole monophosphate (THZ-P) and 2-methyl-4-amino-5-hydroxymethyl pyrimidine pyrophosphate (HMP-PP) to form thiamine monophosphate (TMP). This is Thiamine-phosphate synthase from Citrobacter koseri (strain ATCC BAA-895 / CDC 4225-83 / SGSC4696).